Reading from the N-terminus, the 421-residue chain is Core protease I7 homolog (421 aa).

Residues His-242, Asp-249, and Cys-329 contribute to the active site.

This sequence belongs to the peptidase C57 family.

It is found in the virion. Its function is as follows. Late protein responsible for processing most or all of the viral core and membrane proteins known to undergo morphogenesis-associated proteolysis. These proteolytic events are involved in the transformation of immature virions (IV) into mature virions (MV). The polypeptide is Core protease I7 homolog (Fowlpox virus (strain NVSL) (FPV)).